Here is a 173-residue protein sequence, read N- to C-terminus: MKTKEIVDDVTMKRAITRITYEIIERNKQLDNVVLAGIKTRGVFLARRIQERLHQLEGLDLPIGELDPKPFRDDMRVEEDTTLMSVDITGKDVILIDDVLYTGRTIRAAIDNLVSLGRPARVSLAVLVDRGHRELPIRADYVGKNIPTSSVEEIVVEVVEVDGRDRVSIIDPT.

A PRPP-binding motif is present at residues 93 to 105; it reads VILIDDVLYTGRT.

Belongs to the purine/pyrimidine phosphoribosyltransferase family. PyrR subfamily. As to quaternary structure, homodimer and homohexamer; in equilibrium.

The catalysed reaction is UMP + diphosphate = 5-phospho-alpha-D-ribose 1-diphosphate + uracil. In terms of biological role, regulates transcriptional attenuation of the pyrimidine nucleotide (pyr) operon by binding in a uridine-dependent manner to specific sites on pyr mRNA. This disrupts an antiterminator hairpin in the RNA and favors formation of a downstream transcription terminator, leading to a reduced expression of downstream genes. Also displays a weak uracil phosphoribosyltransferase activity which is not physiologically significant. The sequence is that of Bifunctional protein PyrR from Streptococcus pyogenes serotype M49 (strain NZ131).